Reading from the N-terminus, the 445-residue chain is 23S rRNA (uracil(1939)-C(5))-methyltransferase RlmD (445 aa).

In terms of domain architecture, TRAM spans Ser12–Lys70. Cys83, Cys89, Cys92, and Cys171 together coordinate [4Fe-4S] cluster. Residues Gln278, Phe307, Asn312, Glu328, Asp355, and Asp375 each contribute to the S-adenosyl-L-methionine site. The active-site Nucleophile is Cys401.

The protein belongs to the class I-like SAM-binding methyltransferase superfamily. RNA M5U methyltransferase family. RlmD subfamily.

It catalyses the reaction uridine(1939) in 23S rRNA + S-adenosyl-L-methionine = 5-methyluridine(1939) in 23S rRNA + S-adenosyl-L-homocysteine + H(+). In terms of biological role, catalyzes the formation of 5-methyl-uridine at position 1939 (m5U1939) in 23S rRNA. This chain is 23S rRNA (uracil(1939)-C(5))-methyltransferase RlmD, found in Shewanella piezotolerans (strain WP3 / JCM 13877).